The sequence spans 419 residues: eIF5-mimic protein 1 (419 aa).

Residues 1–22 (MNKHQKPVLTGQRFKTRKRDEK) are disordered. Position 117 is an N6-acetyllysine (Lys117). In terms of domain architecture, W2 spans 248–415 (VQQSLGTRKE…QNAEEESESE (168 aa)). A phosphoserine mark is found at Ser412 and Ser414.

It belongs to the BZW family. Interacts with EIF3E, EIF2S2 and EIF3C.

It is found in the cytoplasm. Its function is as follows. Translation initiation regulator which represses non-AUG initiated translation and repeat-associated non-AUG (RAN) initiated translation by acting as a competitive inhibitor of eukaryotic translation initiation factor 5 (EIF5) function. Increases the accuracy of translation initiation by impeding EIF5-dependent translation from non-AUG codons by competing with it for interaction with EIF2S2 within the 43S pre-initiation complex (PIC) in an EIF3C-binding dependent manner. This is eIF5-mimic protein 1 (BZW2) from Macaca fascicularis (Crab-eating macaque).